A 464-amino-acid polypeptide reads, in one-letter code: Forkhead box protein N3 (464 aa).

2 disordered regions span residues 1–53 (MGPI…EKGG) and 85–108 (PVQD…DAKQ). A compositionally biased stretch (polar residues) spans 14-30 (TGISVSSQCYRSSTLSN). The fork-head DNA-binding region spans 113–209 (KPPYSFSCLI…QALKKTPYHP (97 aa)). Disordered regions lie at residues 294–337 (MESE…SSSA) and 381–428 (LVES…MKEA). Positions 316–336 (SSAKSANKRSSSPSDSISSSS) are enriched in low complexity. The segment covering 389-401 (QHKKKQHLLKLRR) has biased composition (basic residues).

It is found in the nucleus. Functionally, acts as a transcriptional repressor. May be involved in DNA damage-inducible cell cycle arrests (checkpoints). The polypeptide is Forkhead box protein N3 (Xenopus tropicalis (Western clawed frog)).